The primary structure comprises 84 residues: Putative membrane protein insertion efficiency factor (84 aa).

Residues 63-84 form a disordered region; that stretch reads WGGSGYDPVPGADPEHDRRPRG. The span at 75 to 84 shows a compositional bias: basic and acidic residues; it reads DPEHDRRPRG.

The protein belongs to the UPF0161 family.

It is found in the cell inner membrane. Could be involved in insertion of integral membrane proteins into the membrane. The sequence is that of Putative membrane protein insertion efficiency factor from Cereibacter sphaeroides (strain ATCC 17025 / ATH 2.4.3) (Rhodobacter sphaeroides).